Consider the following 154-residue polypeptide: Myoglobin (154 aa).

The 147-residue stretch at 2 to 148 (GLSEGEWQLV…FRKDIATKYK (147 aa)) folds into the Globin domain. S4 carries the post-translational modification Phosphoserine. H65 is a binding site for nitrite. Residue H65 coordinates O2. A Phosphothreonine modification is found at T68. H94 is a heme b binding site.

This sequence belongs to the globin family. In terms of assembly, monomeric.

The protein localises to the cytoplasm. The protein resides in the sarcoplasm. It catalyses the reaction Fe(III)-heme b-[protein] + nitric oxide + H2O = Fe(II)-heme b-[protein] + nitrite + 2 H(+). It carries out the reaction H2O2 + AH2 = A + 2 H2O. In terms of biological role, monomeric heme protein which primary function is to store oxygen and facilitate its diffusion within muscle tissues. Reversibly binds oxygen through a pentacoordinated heme iron and enables its timely and efficient release as needed during periods of heightened demand. Depending on the oxidative conditions of tissues and cells, and in addition to its ability to bind oxygen, it also has a nitrite reductase activity whereby it regulates the production of bioactive nitric oxide. Under stress conditions, like hypoxia and anoxia, it also protects cells against reactive oxygen species thanks to its pseudoperoxidase activity. This Phocoenoides dalli dalli (Dall's porpoise) protein is Myoglobin (MB).